A 352-amino-acid chain; its full sequence is Holliday junction branch migration complex subunit RuvB (352 aa).

A large ATPase domain (RuvB-L) region spans residues F13–Y201. ATP is bound by residues R41, G82, K85, T86, T87, E148–F150, R191, Y201, and R238. T86 provides a ligand contact to Mg(2+). Residues T202–Q273 form a small ATPAse domain (RuvB-S) region. The segment at E276–F352 is head domain (RuvB-H). 2 residues coordinate DNA: R330 and R335.

It belongs to the RuvB family. As to quaternary structure, homohexamer. Forms an RuvA(8)-RuvB(12)-Holliday junction (HJ) complex. HJ DNA is sandwiched between 2 RuvA tetramers; dsDNA enters through RuvA and exits via RuvB. An RuvB hexamer assembles on each DNA strand where it exits the tetramer. Each RuvB hexamer is contacted by two RuvA subunits (via domain III) on 2 adjacent RuvB subunits; this complex drives branch migration. In the full resolvosome a probable DNA-RuvA(4)-RuvB(12)-RuvC(2) complex forms which resolves the HJ.

It is found in the cytoplasm. It catalyses the reaction ATP + H2O = ADP + phosphate + H(+). In terms of biological role, the RuvA-RuvB-RuvC complex processes Holliday junction (HJ) DNA during genetic recombination and DNA repair, while the RuvA-RuvB complex plays an important role in the rescue of blocked DNA replication forks via replication fork reversal (RFR). RuvA specifically binds to HJ cruciform DNA, conferring on it an open structure. The RuvB hexamer acts as an ATP-dependent pump, pulling dsDNA into and through the RuvAB complex. RuvB forms 2 homohexamers on either side of HJ DNA bound by 1 or 2 RuvA tetramers; 4 subunits per hexamer contact DNA at a time. Coordinated motions by a converter formed by DNA-disengaged RuvB subunits stimulates ATP hydrolysis and nucleotide exchange. Immobilization of the converter enables RuvB to convert the ATP-contained energy into a lever motion, pulling 2 nucleotides of DNA out of the RuvA tetramer per ATP hydrolyzed, thus driving DNA branch migration. The RuvB motors rotate together with the DNA substrate, which together with the progressing nucleotide cycle form the mechanistic basis for DNA recombination by continuous HJ branch migration. Branch migration allows RuvC to scan DNA until it finds its consensus sequence, where it cleaves and resolves cruciform DNA. This Prochlorococcus marinus (strain AS9601) protein is Holliday junction branch migration complex subunit RuvB.